Reading from the N-terminus, the 1555-residue chain is Regulating synaptic membrane exocytosis protein 2 (1555 aa).

Positions 1–35 (MSAPLGPRGRPAPTPAASQPPPQPEMPDLSHLTEE) are disordered. The segment covering 10 to 25 (RPAPTPAASQPPPQPE) has biased composition (pro residues). In terms of domain architecture, RabBD spans 26 to 154 (MPDLSHLTEE…TKSGAWFYNS (129 aa)). The FYVE-type zinc-finger motif lies at 86-142 (KGDAPTCGICHKTKFADGCGHNCSYCQTKFCARCGGRVSLRSNKVMWVCNLCRKQQE). Zn(2+) contacts are provided by cysteine 92, cysteine 95, cysteine 108, cysteine 111, cysteine 116, cysteine 119, cysteine 134, and cysteine 137. A compositionally biased stretch (polar residues) spans 154-163 (SGSNTPQQPD). A disordered region spans residues 154 to 530 (SGSNTPQQPD…STPEYTSCDD (377 aa)). Over residues 170 to 185 (LRSEEAPQEKKAKLHE) the composition is skewed to basic and acidic residues. The span at 259–268 (YVPSDSTMPR) shows a compositional bias: polar residues. Basic and acidic residues-rich tracts occupy residues 287-298 (EPDHLNYRDSNR), 317-335 (RDEY…RYRS), 351-370 (EQMR…RHSD), and 379-403 (EDSR…RRAA). At serine 369 the chain carries Phosphoserine. Over residues 418–432 (AQGQSSYPQRTTNHS) the composition is skewed to polar residues. Basic and acidic residues predominate over residues 444–461 (DRPELRRADSLRKQHHLD). The span at 479 to 490 (RNDSLSSDQSES) shows a compositional bias: polar residues. Residues 497–506 (RPHKSKKGGK) show a composition bias toward basic residues. The PDZ domain maps to 590–676 (DGSVPRDSGA…EPQVELVVSR (87 aa)). At threonine 611 the chain carries Phosphothreonine. Positions 682-716 (PRIPDSTHAQLESSSSSFESQKMDRPSISVTSPMS) are disordered. Phosphoserine is present on residues serine 713 and serine 716. Residues 743–866 (FVPRVQIKLW…ALLDDEPHWY (124 aa)) enclose the C2 1 domain. 5 disordered regions span residues 877-913 (PLPH…VSDY), 935-1145 (STLS…KRNS), 1180-1207 (YRSG…DVSA), 1268-1288 (LEKN…TSGK), and 1307-1332 (KSRS…QRST). The span at 935-953 (STLSVPEQVMSSNHCSPSG) shows a compositional bias: polar residues. Basic and acidic residues-rich tracts occupy residues 996 to 1014 (RMDR…RDSH) and 1025 to 1071 (QTSE…ERAD). Over residues 1092–1114 (ALSRSHPRTGSVQTSPSSTPVTG) the composition is skewed to low complexity. A Phosphoserine modification is found at serine 1106. Composition is skewed to basic and acidic residues over residues 1128–1141 (TLER…DSTR) and 1180–1190 (YRSGWDPHRGA). Serine 1200 and serine 1276 each carry phosphoserine. In terms of domain architecture, C2 2 spans 1401 to 1519 (AMGDIQVGMM…ELSNMVIGWF (119 aa)). Phosphoserine is present on residues serine 1540 and serine 1543.

As to quaternary structure, heterodimer with PCLO. Part of a ternary complex involving PCLO and EPAC2. Interacts with RAB3C, RAB3D and RAB26. Binds RAB3A and RAB3B that have been activated by GTP-binding. Interacts with TSPOAP1 and RIMBP2. Interacts with PPFIA3 and PPFIA4. Interacts via its zinc finger with the first C2 domain of UNC13A. Forms a complex consisting of UNC13A, RIMS2 and RAB3A. Highly expressed in hippocampus, brain cortex, cerebellum and olfactory bulb. Detected at intermediate levels in midbrain, hindbrain and spinal cord, and at low levels in testis.

The protein resides in the cell membrane. Its subcellular location is the synapse. It localises to the presynaptic cell membrane. Functionally, rab effector involved in exocytosis. May act as scaffold protein. Plays a role in dendrite formation by melanocytes. This is Regulating synaptic membrane exocytosis protein 2 (Rims2) from Rattus norvegicus (Rat).